A 432-amino-acid chain; its full sequence is Amino-acid acetyltransferase (432 aa).

Positions 286-425 constitute an N-acetyltransferase domain; it reads EKLREATIED…ASLYNYQRQS (140 aa).

It belongs to the acetyltransferase family. ArgA subfamily.

The protein localises to the cytoplasm. The enzyme catalyses L-glutamate + acetyl-CoA = N-acetyl-L-glutamate + CoA + H(+). Its pathway is amino-acid biosynthesis; L-arginine biosynthesis; N(2)-acetyl-L-ornithine from L-glutamate: step 1/4. This is Amino-acid acetyltransferase from Azotobacter vinelandii (strain DJ / ATCC BAA-1303).